A 212-amino-acid polypeptide reads, in one-letter code: Large ribosomal subunit protein uL3 (212 aa).

N5-methylglutamine is present on Gln-153.

This sequence belongs to the universal ribosomal protein uL3 family. In terms of assembly, part of the 50S ribosomal subunit. Forms a cluster with proteins L14 and L19. Methylated by PrmB.

In terms of biological role, one of the primary rRNA binding proteins, it binds directly near the 3'-end of the 23S rRNA, where it nucleates assembly of the 50S subunit. This chain is Large ribosomal subunit protein uL3, found in Idiomarina loihiensis (strain ATCC BAA-735 / DSM 15497 / L2-TR).